The following is a 529-amino-acid chain: Alkaline phosphatase, germ cell type (529 aa).

Residues 1–18 (MWGACLLLLGLSLQVCPS) form the signal peptide. D60 is a binding site for Mg(2+). Positions 60 and 110 each coordinate Zn(2+). The Phosphoserine intermediate role is filled by S110. A disulfide bridge connects residues C139 and C201. The N-linked (GlcNAc...) asparagine glycan is linked to N140. Mg(2+) is bound at residue S173. E234 provides a ligand contact to Ca(2+). N-linked (GlcNAc...) asparagine glycosylation is found at N267 and N277. F287, E288, and D303 together coordinate Ca(2+). E329 is a Mg(2+) binding site. Residues D334, H338, D375, H376, and H450 each coordinate Zn(2+). The cysteines at positions 485 and 492 are disulfide-linked. The GPI-anchor amidated serine moiety is linked to residue S502. The propeptide at 503–529 (AVSPGYMSTLLCLLAGKMLMLMAAAEP) is removed in mature form.

It belongs to the alkaline phosphatase family. In terms of assembly, homodimer. Requires Mg(2+) as cofactor. Zn(2+) serves as cofactor. It depends on Ca(2+) as a cofactor. As to expression, embryo and testis.

Its subcellular location is the cell membrane. The catalysed reaction is a phosphate monoester + H2O = an alcohol + phosphate. Its activity is regulated as follows. Inhibited by L-leucine, EDTA and heat. Alkaline phosphatase that can hydrolyze various phosphate compounds. In Mus musculus (Mouse), this protein is Alkaline phosphatase, germ cell type (Alpg).